A 38-amino-acid chain; its full sequence is Glucagon-like peptide (38 aa).

The protein belongs to the glucagon family.

The protein localises to the secreted. In Hydrolagus colliei (Spotted ratfish), this protein is Glucagon-like peptide.